A 746-amino-acid polypeptide reads, in one-letter code: Transcription factor pbcR (746 aa).

Positions 1 to 12 (MYPWSSTGTSPF) are enriched in polar residues. Residues 1-40 (MYPWSSTGTSPFSHPDNEGAESGDMSMGEEQQQPHQRRQK) are disordered. The segment at residues 47-76 (CQSCRASKVRCDQPNPGMPCLRCQKSGKPC) is a DNA-binding region (zn(2)-C6 fungal-type). Residues 109 to 131 (ELQDSAGDGETAHSTALRSPSQL) are disordered. A compositionally biased stretch (polar residues) spans 120 to 131 (AHSTALRSPSQL).

It is found in the nucleus. Transcription factor; part of the gene cluster that mediates the biosynthesis of the diterpene ent-pimara-8(14),15-diene (PD). Acts as a positive regulator for the cluster gene. Down-regulates the expression of the penicillin gene cluster, two putative polyketide clusters, and one putative nonribosomal peptide cluster. This chain is Transcription factor pbcR, found in Emericella nidulans (strain FGSC A4 / ATCC 38163 / CBS 112.46 / NRRL 194 / M139) (Aspergillus nidulans).